A 417-amino-acid chain; its full sequence is Lissencephaly-1 homolog (417 aa).

Residues 7–39 (QKEELNGAILDYFDSSGYKLTSTEFTKETNIEL) form the LisH domain. Positions 52-80 (TSVIRLQKKVMDLEAKVSQLEEELNNGGR) form a coiled coil. The segment at 72–93 (EEELNNGGRGPARRGKEDALPR) is disordered. WD repeat units follow at residues 102 to 143 (GHRN…RTLK), 144 to 185 (GHTN…KTLH), 186 to 225 (GHDH…CTKT), 228 to 267 (GHED…CLLT), 270 to 339 (EHSH…CLQT), 342 to 383 (GHDN…KTIN), and 385 to 417 (AHSH…WKLG).

Belongs to the WD repeat LIS1/nudF family.

It localises to the cytoplasm. The protein localises to the cytoskeleton. The protein resides in the microtubule organizing center. It is found in the centrosome. Positively regulates the activity of the minus-end directed microtubule motor protein dynein. May enhance dynein-mediated microtubule sliding by targeting dynein to the microtubule plus end. Required for several dynein- and microtubule-dependent processes. This is Lissencephaly-1 homolog from Heterostelium pallidum (strain ATCC 26659 / Pp 5 / PN500) (Cellular slime mold).